Consider the following 887-residue polypeptide: MAEAVELPSRLGILAFRNKVLLPGAIIRIRCTSPSSVKLVEQELWQREEKGLIGIVPVRDASESASVAPVLYPGGGTDSGERNVKSQPGLSDSRKADGKSQQEAVHWHTRGVAARALHLSRGVEKPSGRVTYTVVLEGLCRFRVMELNSRGNYYTARISPLDITKADMEQAQQDPDFVSLARQFKVTAVELISVLEQKQKTGGRTKVLLETVPVHKLADIFVASFEISFEEQLCMLDSIDLKVRLSKATELVDRHLQSIRVAEKITQKVEGQLSKSQREFLLRQQMRAIKEELGDNDDDEDDVAVLERKMQSAGMPANIWKHAQRELRRLKKMQPQQPGYSSSRVYLELLADLPWQNATEEQKLDLRAAKERLDSDHYGLVKVKQRIIEYLAVRKLKPDARGPILCFVGPPGVGKTSLAASISAALGRKFIRISLGGVKDEADIRGHRRTYIGSMPGRLIDGIKRVGVSNPVMLLDEIDKTGSDVRGDPASALLEVLDPEQNKTFNDHYLNVPYDLSKVIFVATANKVQPIPPPLLDRMEVIELPGYTPEEKARIAMQYLIPRVMDQHGLSSEFLQISEDMVKLIIQRYTREAGVRNLERNLSALARAAAVKVAEQDNATAVSKDFHQFTSPVEESRLAEGAEVEMEVIPMGVDNREISNALQVMSPLIVDETMLENVLGPPRYDDRETAERVSNPGVSVGLVWTAFGGEVQFVEASVMAGKGELRLTGQLGDVIKESAQIALTWVRARAMELNLVATGEINLMEGRDIHIHFPAGAVPKDGPSAGVTLVTALVSLLSQKRMRADTAMTGEMTLRGLVLPVGGVKDKVLAAHRYGIKRVILPERNLKDLVEVPSAVLSNLEIIYAKRMEVLEQAFEGGCPWRQRARL.

Residues 11–256 enclose the Lon N-terminal domain; it reads LGILAFRNKV…KATELVDRHL (246 aa). Positions 72 to 101 are disordered; that stretch reads YPGGGTDSGERNVKSQPGLSDSRKADGKSQ. Residue 409-416 coordinates ATP; it reads GPPGVGKT. In terms of domain architecture, Lon proteolytic spans 693-878; it reads VSNPGVSVGL…EVLEQAFEGG (186 aa). Active-site residues include S784 and K827. A Microbody targeting signal motif is present at residues 885–887; that stretch reads ARL.

It belongs to the peptidase S16 family.

Its subcellular location is the peroxisome matrix. The enzyme catalyses Hydrolysis of proteins in presence of ATP.. ATP-dependent serine protease that mediates the selective degradation of misfolded and unassembled polypeptides in the peroxisomal matrix. Necessary for type 2 peroxisome targeting signal (PTS2)-containing protein processing and facilitates peroxisome matrix protein import. In Spinacia oleracea (Spinach), this protein is Lon protease homolog 2, peroxisomal.